An 84-amino-acid chain; its full sequence is MIAMFTTLLMFYVSQNNIISLLIAIEILLLTVTVKIIYLGGQFDDVQSTMFALFIITLAGAESAIGLSLLVSYYRLRGKVTNIL.

2 helical membrane-spanning segments follow: residues 18–38 (IISL…KIIY) and 51–71 (FALF…SLLV).

This sequence belongs to the complex I subunit 4L family.

It localises to the mitochondrion membrane. It catalyses the reaction a ubiquinone + NADH + 5 H(+)(in) = a ubiquinol + NAD(+) + 4 H(+)(out). Functionally, core subunit of the mitochondrial membrane respiratory chain NADH dehydrogenase (Complex I) that is believed to belong to the minimal assembly required for catalysis. Complex I functions in the transfer of electrons from NADH to the respiratory chain. The immediate electron acceptor for the enzyme is believed to be ubiquinone. This chain is NADH-ubiquinone oxidoreductase chain 4L (ND4L), found in Debaryomyces hansenii (strain ATCC 36239 / CBS 767 / BCRC 21394 / JCM 1990 / NBRC 0083 / IGC 2968) (Yeast).